The primary structure comprises 184 residues: Photosystem I assembly protein Ycf4 (184 aa).

A run of 2 helical transmembrane segments spans residues 22–42 (FFWACILFLGSLGFLVVGTSS) and 57–77 (ISFFPQGIVMSFYGIAGLFIS).

Belongs to the Ycf4 family.

The protein localises to the plastid. It is found in the chloroplast thylakoid membrane. Its function is as follows. Seems to be required for the assembly of the photosystem I complex. The protein is Photosystem I assembly protein Ycf4 of Lemna minor (Common duckweed).